The chain runs to 449 residues: Guanine nucleotide-binding protein alpha-2 subunit (449 aa).

The disordered stretch occupies residues 1–91; the sequence is MGLCASSEKN…TATANTSGSQ (91 aa). Gly2 carries N-myristoyl glycine lipidation. Cys4 carries S-palmitoyl cysteine lipidation. Polar residues-rich tracts occupy residues 7 to 23 and 38 to 48; these read SEKN…SAGS and QKTVRTVNTAN. The segment covering 49 to 59 has biased composition (low complexity); sequence QQEKQQQRQQQ. Residues 72 to 91 show a composition bias toward polar residues; the sequence is NGSINNAISPTATANTSGSQ. The 327-residue stretch at 122–448 folds into the G-alpha domain; sequence KELKVLLLGA…ENTLKDSGVL (327 aa). The G1 motif stretch occupies residues 125-138; it reads KVLLLGAGESGKST. GTP-binding residues include Glu133, Ser134, Gly135, Lys136, Ser137, Thr138, Asp245, Leu270, Thr276, Gly299, Asn365, Lys366, Asp368, and Ala420. Ser137 is a Mg(2+) binding site. The G2 motif stretch occupies residues 268–276; it reads DILRSRQMT. Thr276 lines the Mg(2+) pocket. Residues 292 to 301 are G3 motif; it reads MHIYDVGGQR. The interval 361–368 is G4 motif; the sequence is VLFLNKID. Residues 418–423 form a G5 motif region; it reads TQATDT.

This sequence belongs to the G-alpha family. G(q) subfamily. G proteins are composed of 3 units; alpha, beta and gamma. The alpha chain contains the guanine nucleotide binding site. GPA2 interacts with the kelch repeat beta-mimic proteins GPB1 and GPB2 and with the gamma subunit GPG1. Interacts with the G protein coupled receptor GPR1. Also interacts with regulators of G protein signaling (RGS) protein RGS2. Mg(2+) is required as a cofactor. Post-translationally, myristoylation at Gly-2 and palmitoylation at Cys-4 are required for membrane localization and function of the protein.

Its subcellular location is the cell membrane. With respect to regulation, alternates between an inactive form bound to GDP and an active form bound to GTP. Activated by the G protein coupled receptor (GPCR) GPR1, which serves as a guanine nucleotide-exchange factor (GEF), and inactivated by RGS2, acting as a GTPase-activating protein (GAP) for GPA2. Alpha subunit of the heterotrimeric guanine nucleotide-binding protein (G protein) involved in glucose-induced cAMP signaling. Binds to its cognate transmembrane receptor GPR1, which senses extracellular carbon sources, and activates cAMP-PKA signaling and governs diploid pseudohyphal differentiation and haploid invasive growth. The G protein beta-mimic proteins GPB1 and GPB2 inhibit GPA2-GPR1 coupling, probably to reduce signaling in the absence of glucose. The polypeptide is Guanine nucleotide-binding protein alpha-2 subunit (GPA2) (Saccharomyces cerevisiae (strain ATCC 204508 / S288c) (Baker's yeast)).